We begin with the raw amino-acid sequence, 292 residues long: Protein LRATD1 (292 aa).

Phosphoserine is present on Ser38. An LRAT domain is found at 133–228; that stretch reads PAPEPPAPAP…CRFGKREFKA (96 aa).

It belongs to the LRATD family. In terms of tissue distribution, only detected in testis. Highly expressed in colon cancer cells.

Its subcellular location is the cytoplasm. Functionally, may play a role in cell morphology and motility. This is Protein LRATD1 from Homo sapiens (Human).